Consider the following 325-residue polypeptide: L-lactate dehydrogenase 1 (325 aa).

NAD(+)-binding positions include valine 17, aspartate 38, lysine 43, tyrosine 68, and 82 to 83 (GA). Substrate contacts are provided by residues glutamine 85, arginine 91, and 123–126 (NPVD). Residues 121–123 (AAN) and serine 146 contribute to the NAD(+) site. Substrate is bound at residue 151 to 154 (DTAR). Residues arginine 156 and histidine 171 each coordinate beta-D-fructose 1,6-bisphosphate. Histidine 178 functions as the Proton acceptor in the catalytic mechanism. The residue at position 223 (tyrosine 223) is a Phosphotyrosine. Threonine 232 is a binding site for substrate.

It belongs to the LDH/MDH superfamily. LDH family. In terms of assembly, homotetramer.

It localises to the cytoplasm. It catalyses the reaction (S)-lactate + NAD(+) = pyruvate + NADH + H(+). It participates in fermentation; pyruvate fermentation to lactate; (S)-lactate from pyruvate: step 1/1. Allosterically activated by fructose 1,6-bisphosphate (FBP). Catalyzes the conversion of lactate to pyruvate. In Lactococcus lactis subsp. lactis (strain IL1403) (Streptococcus lactis), this protein is L-lactate dehydrogenase 1.